The chain runs to 349 residues: Protein FAM98C (349 aa).

The tract at residues 313–349 (PDRGGRPNELEPPMPTWRSRREDGGPQCWGRKKKKKK) is disordered.

This sequence belongs to the FAM98 family.

In Homo sapiens (Human), this protein is Protein FAM98C (FAM98C).